Here is a 290-residue protein sequence, read N- to C-terminus: Shikimate dehydrogenase (NADP(+)) (290 aa).

Residues 22–24 and T68 each bind shikimate; that span reads SLS. Residue K72 is the Proton acceptor of the active site. Positions 93 and 108 each coordinate shikimate. NADP(+) is bound by residues 133–137 and I228; that span reads GSGGS. Y230 contacts shikimate. G251 is a binding site for NADP(+).

This sequence belongs to the shikimate dehydrogenase family. In terms of assembly, homodimer.

It catalyses the reaction shikimate + NADP(+) = 3-dehydroshikimate + NADPH + H(+). Its pathway is metabolic intermediate biosynthesis; chorismate biosynthesis; chorismate from D-erythrose 4-phosphate and phosphoenolpyruvate: step 4/7. Functionally, involved in the biosynthesis of the chorismate, which leads to the biosynthesis of aromatic amino acids. Catalyzes the reversible NADPH linked reduction of 3-dehydroshikimate (DHSA) to yield shikimate (SA). This Leptospira borgpetersenii serovar Hardjo-bovis (strain JB197) protein is Shikimate dehydrogenase (NADP(+)).